The primary structure comprises 511 residues: GMP synthase [glutamine-hydrolyzing] (511 aa).

The 191-residue stretch at 5–195 (AILVLDFGSQ…VFKICQAQIN (191 aa)) folds into the Glutamine amidotransferase type-1 domain. Residue C82 is the Nucleophile of the active site. Residues H169 and E171 contribute to the active site. The region spanning 196–386 (WSLEGNLETI…LGIKKESLYR (191 aa)) is the GMPS ATP-PPase domain. 223-229 (SGGTDSL) serves as a coordination point for ATP.

As to quaternary structure, homodimer.

The enzyme catalyses XMP + L-glutamine + ATP + H2O = GMP + L-glutamate + AMP + diphosphate + 2 H(+). Its pathway is purine metabolism; GMP biosynthesis; GMP from XMP (L-Gln route): step 1/1. In terms of biological role, catalyzes the synthesis of GMP from XMP. The polypeptide is GMP synthase [glutamine-hydrolyzing] (guaA) (Borreliella burgdorferi (strain ATCC 35210 / DSM 4680 / CIP 102532 / B31) (Borrelia burgdorferi)).